The following is a 209-amino-acid chain: uncharacterized protein (209 aa).

This is an uncharacterized protein from Acanthamoeba polyphaga mimivirus (APMV).